The following is a 571-amino-acid chain: uncharacterized protein (571 aa).

The next 5 membrane-spanning stretches (helical) occupy residues 10 to 29 (VRLH…HFIG), 36 to 55 (VSLG…GLLF), 65 to 87 (WAFF…FASL), 96 to 118 (ALAV…LFRF), and 166 to 188 (ATTY…PRLL). One can recognise an RCK C-terminal domain in the interval 294–378 (TEVDDQELLS…IATAARNLGF (85 aa)). Helical transmembrane passes span 388–406 (LVYL…LLQV), 411–433 (VPLG…WLYS), 446–465 (LRLL…GLAA), 480–502 (LFAK…GLLL), 509–531 (LPPI…LNAL), and 546–568 (VPFA…CAVA).

This sequence belongs to the AAE transporter (TC 2.A.81) family.

Its subcellular location is the cell membrane. This is an uncharacterized protein from Bordetella bronchiseptica (strain ATCC BAA-588 / NCTC 13252 / RB50) (Alcaligenes bronchisepticus).